An 89-amino-acid chain; its full sequence is Large ribosomal subunit protein bL27 (89 aa).

The segment at 1–23 is disordered; the sequence is MAHKKAGGSSRNGRDSAGKRLGI.

The protein belongs to the bacterial ribosomal protein bL27 family.

This Rhodopseudomonas palustris (strain BisA53) protein is Large ribosomal subunit protein bL27.